The sequence spans 134 residues: Large ribosomal subunit protein uL18 (134 aa).

This sequence belongs to the universal ribosomal protein uL18 family. In terms of assembly, part of the 50S ribosomal subunit; part of the 5S rRNA/L5/L18/L25 subcomplex. Contacts the 5S and 23S rRNAs.

Its function is as follows. This is one of the proteins that bind and probably mediate the attachment of the 5S RNA into the large ribosomal subunit, where it forms part of the central protuberance. The polypeptide is Large ribosomal subunit protein uL18 (Corynebacterium efficiens (strain DSM 44549 / YS-314 / AJ 12310 / JCM 11189 / NBRC 100395)).